Here is a 120-residue protein sequence, read N- to C-terminus: Prefoldin subunit beta (120 aa).

The protein belongs to the prefoldin subunit beta family. In terms of assembly, heterohexamer of two alpha and four beta subunits.

The protein resides in the cytoplasm. Molecular chaperone capable of stabilizing a range of proteins. Seems to fulfill an ATP-independent, HSP70-like function in archaeal de novo protein folding. The sequence is that of Prefoldin subunit beta from Methanothrix thermoacetophila (strain DSM 6194 / JCM 14653 / NBRC 101360 / PT) (Methanosaeta thermophila).